We begin with the raw amino-acid sequence, 390 residues long: Phosphopentomutase (390 aa).

Mn(2+) contacts are provided by Asp-10, Asp-282, His-287, Asp-323, His-324, and His-335.

It belongs to the phosphopentomutase family. Requires Mn(2+) as cofactor.

The protein localises to the cytoplasm. It carries out the reaction 2-deoxy-alpha-D-ribose 1-phosphate = 2-deoxy-D-ribose 5-phosphate. The enzyme catalyses alpha-D-ribose 1-phosphate = D-ribose 5-phosphate. Its pathway is carbohydrate degradation; 2-deoxy-D-ribose 1-phosphate degradation; D-glyceraldehyde 3-phosphate and acetaldehyde from 2-deoxy-alpha-D-ribose 1-phosphate: step 1/2. Isomerase that catalyzes the conversion of deoxy-ribose 1-phosphate (dRib-1-P) and ribose 1-phosphate (Rib-1-P) to deoxy-ribose 5-phosphate (dRib-5-P) and ribose 5-phosphate (Rib-5-P), respectively. The protein is Phosphopentomutase of Lachnoclostridium phytofermentans (strain ATCC 700394 / DSM 18823 / ISDg) (Clostridium phytofermentans).